Here is a 658-residue protein sequence, read N- to C-terminus: MAKSGEALPQGSLAPAQDSQLIRVTVKTPKDKEDFSVVDTCTIRQLKEKISHRFKAHPNQLVLIFAGKILKDPDSLAQCGVRDGLTVHLVIKMQRRTIGTECPSPPVSIPGPNPGEIPQSSSVYSVDGSPSFSLGVLTGLSGLGLTSGSFSDQPGSLMWQHISVPELVAQLVDDPFIQGLLSNTGLVRQLVLDNPHMQHLIQQNPEIGHILNNPEIMRQTMEFLRNPSMMQEMMRSQDRALSNLESIPGGYNVLRTMYTDIMDPMLNAVQEQFGGNPFVTATTASTTTTSSQPSRTENCDPLPNPWTSTYGVSGGRQGRGGRQSGDQDASENRNRLPSFLGNIGLFDYLQQLHETSQSLESYLQGTVPTSNPSQESPLSGNRVPPTLPSSPKSGSGQSLPKESVAIKGKSSCPAFLRHSTENSTGQGGSLHDAGKGSTGPSTSLPNLTSQIGDSANRSSFVSTPSSLMSATPGVPESPWLPPTGYSRSLRSAGTNQVPRIQNEIHQQLPLLLHLQTAMANPRVMQALLQIEQGLQILATEAPRLLLWFMPCLTGLNGVTGGTEAREGVVMSEDPRPTPTPQISLAQGSTELGIHSSPFLQVLQALASTNPQQLQLEAHFRVQLEQLRAMGFLNLEANLQALIATEGDVDAAVEKLRKS.

The 75-residue stretch at 22 to 96 (IRVTVKTPKD…VHLVIKMQRR (75 aa)) folds into the Ubiquitin-like domain. In terms of domain architecture, STI1 spans 194 to 233 (NPHMQHLIQQNPEIGHILNNPEIMRQTMEFLRNPSMMQEM). Over residues 280–291 (TATTASTTTTSS) the composition is skewed to low complexity. Disordered regions lie at residues 280–336 (TATT…RNRL) and 362–478 (YLQG…PESP). Residues 312 to 323 (VSGGRQGRGGRQ) are compositionally biased toward gly residues. 3 stretches are compositionally biased toward polar residues: residues 362 to 379 (YLQG…SPLS), 389 to 400 (SSPKSGSGQSLP), and 438 to 469 (TGPS…SLMS). Residues 614–658 (QLEAHFRVQLEQLRAMGFLNLEANLQALIATEGDVDAAVEKLRKS) form the UBA domain.

In terms of tissue distribution, testis-specific (at protein level).

The protein is Ubiquilin-3 (Ubqln3) of Mus musculus (Mouse).